The following is a 120-amino-acid chain: Immunoglobulin kappa variable 2D-29 (120 aa).

The signal sequence occupies residues 1 to 20 (MRLPAQLLGLLMLWIPGSSA). The segment at 21–43 (DIVMTQTPLSLSVTPGQPASISC) is framework-1. Positions 21–120 (DIVMTQTPLS…YYCMQSIQLP (100 aa)) constitute an Ig-like domain. A disulfide bridge links C43 with C113. The interval 44–59 (KSSQSLLHSDGKTYLY) is complementarity-determining-1. The tract at residues 60-74 (WYLQKPGQPPQLLIY) is framework-2. Residues 75 to 81 (EVSNRFS) form a complementarity-determining-2 region. Positions 82-113 (GVPDRFSGSGSGTDFTLKISRVEAEDVGVYYC) are framework-3. Positions 114-120 (MQSIQLP) are complementarity-determining-3.

In terms of assembly, immunoglobulins are composed of two identical heavy chains and two identical light chains; disulfide-linked.

The protein resides in the secreted. Its subcellular location is the cell membrane. Its function is as follows. V region of the variable domain of immunoglobulin light chains that participates in the antigen recognition. Immunoglobulins, also known as antibodies, are membrane-bound or secreted glycoproteins produced by B lymphocytes. In the recognition phase of humoral immunity, the membrane-bound immunoglobulins serve as receptors which, upon binding of a specific antigen, trigger the clonal expansion and differentiation of B lymphocytes into immunoglobulins-secreting plasma cells. Secreted immunoglobulins mediate the effector phase of humoral immunity, which results in the elimination of bound antigens. The antigen binding site is formed by the variable domain of one heavy chain, together with that of its associated light chain. Thus, each immunoglobulin has two antigen binding sites with remarkable affinity for a particular antigen. The variable domains are assembled by a process called V-(D)-J rearrangement and can then be subjected to somatic hypermutations which, after exposure to antigen and selection, allow affinity maturation for a particular antigen. This Homo sapiens (Human) protein is Immunoglobulin kappa variable 2D-29.